The chain runs to 255 residues: DASH complex subunit SPC34 (255 aa).

The interval 53–81 (LFSVPPPPPRQTTLTAEQQQQQKPSNRRQ) is disordered. The span at 63–81 (QTTLTAEQQQQQKPSNRRQ) shows a compositional bias: polar residues. Positions 176–248 (LAYYEAKIAE…QARLRALDAD (73 aa)) form a coiled coil.

This sequence belongs to the DASH complex SPC34 family. Component of the DASH complex consisting of ASK1, DAD1, DAD2, DAD3, DAD4, DAM1, DUO1, HSK3, SPC19 and SPC34, with a stoichiometry of one copy of each subunit per complex. Multiple DASH complexes oligomerize to form a ring that encircles spindle microtubules and organizes the rod-like NDC80 complexes of the outer kinetochore of the outer kinetochore. DASH complex oligomerization strengthens microtubule attachments. On cytoplasmic microtubules, DASH complexes appear to form patches instead of rings.

It is found in the nucleus. The protein resides in the cytoplasm. Its subcellular location is the cytoskeleton. It localises to the spindle. The protein localises to the chromosome. It is found in the centromere. The protein resides in the kinetochore. Its function is as follows. Component of the DASH complex that connects microtubules with kinetochores and couples microtubule depolymerisation to chromosome movement; it is involved in retrieving kinetochores to the spindle poles before their re-orientation on the spindle in early mitosis and allows microtubule depolymerization to pull chromosomes apart and resist detachment during anaphase. Kinetochores, consisting of a centromere-associated inner segment and a microtubule-contacting outer segment, play a crucial role in chromosome segregation by mediating the physical connection between centromeric DNA and microtubules. Kinetochores also serve as an input point for the spindle assembly checkpoint, which delays anaphase until all chromosomes have bioriented on the mitotic spindle. The protein is DASH complex subunit SPC34 of Chaetomium thermophilum (strain DSM 1495 / CBS 144.50 / IMI 039719) (Thermochaetoides thermophila).